Consider the following 326-residue polypeptide: High-affinity zinc uptake system protein ZnuA (326 aa).

The first 22 residues, 1–22 (MIRPSSLVLAAALGTAALPARA), serve as a signal peptide directing secretion. Residue His-59 participates in Zn(2+) binding. Basic and acidic residues predominate over residues 117–155 (GGEHEHEHEHEHEHEHEHEHDGHGHAEEQAHHDHDHSGT). The interval 117–161 (GGEHEHEHEHEHEHEHEHEHDGHGHAEEQAHHDHDHSGTDPHAWL) is disordered. 3 residues coordinate Zn(2+): His-158, His-222, and Asp-295. An intrachain disulfide couples Cys-267 to Cys-322.

The protein belongs to the bacterial solute-binding protein 9 family. In terms of assembly, monomer.

It localises to the periplasm. Part of the ATP-binding cassette (ABC) transport system ZnuABC involved in zinc import. Binds zinc with high affinity and specificity and delivers it to the membrane permease for translocation into the cytoplasm. This chain is High-affinity zinc uptake system protein ZnuA, found in Paracoccus denitrificans (strain Pd 1222).